The sequence spans 229 residues: Choline-phosphate cytidylyltransferase (229 aa).

L6, A8, G9, Y80, N82, S85, and A101 together coordinate CDP-choline. D102 contributes to the Mg(2+) binding site. Residue Y185 coordinates CDP-choline. 2 residues coordinate Mg(2+): E211 and D213.

It belongs to the LicC/PntC cytidylyltransferase family. As to quaternary structure, monomer. Forms dimers in LicC-CDP-Cho-Mg(2+) crystals, but the monomer is probably the biologically functional unit. Mg(2+) serves as cofactor.

It carries out the reaction phosphocholine + CTP + H(+) = CDP-choline + diphosphate. It functions in the pathway cell wall biogenesis; teichoic acid biosynthesis. Its pathway is cell wall biogenesis; lipoteichoic acid biosynthesis. Its activity is regulated as follows. Mg(2+) in slight excess of CTP gives maximal activity. Strongly inhibited by Ca(2+) and several other metal ions, such as Cd(2+), Co(2+), Cu(2+), Mn(2+), Ni(2+), Zn(2+) and Fe(2+). Also inhibited by Mg(2+) at high concentrations. CDP-Cho is a competitive inhibitor with respect to CTP, whereas diphosphate is a mixed-type inhibitor with respect to CTP. Its function is as follows. Cytidylyltransferase involved in the biosynthesis of the phosphocholine containing cell wall constituents, teichoic acid and lipoteichoic acid, which are essential for cell separation and pathogenesis. Catalyzes the activation of phosphocholine (P-Cho) to CDP-choline (CDP-Cho). Can also use phosphoethanolamine and 2-aminoethylphosphonate, with much lower efficiency. Shows lower activity with dCTP, weak activity with ATP and no activity with GTP, TTP, UTP, dATP, dGTP and dTTP. This Streptococcus pneumoniae (strain ATCC BAA-255 / R6) protein is Choline-phosphate cytidylyltransferase.